A 727-amino-acid chain; its full sequence is Non-structural protein 4 (727 aa).

Disordered stretches follow at residues 1-38 and 673-727; these read MNQSRSFVTGRGRDLSRTPSALSSNSETPGSMSSPSEG and SMTL…KLSK. Positions 17-38 are enriched in polar residues; sequence RTPSALSSNSETPGSMSSPSEG. Residues 712-727 are compositionally biased toward basic residues; the sequence is SRRKARKARAASKLSK.

The sequence is that of Non-structural protein 4 from Rice dwarf virus (isolate Akita) (RDV).